The primary structure comprises 483 residues: Glutarate-semialdehyde dehydrogenase (483 aa).

Residues 156–157 (WN), 180–183 (KPAS), and 233–234 (GS) contribute to the NADP(+) site. The Proton acceptor role is filled by E255. Position 256 (L256) interacts with NADP(+). C289 acts as the Nucleophile in catalysis. E386 contacts NADP(+).

The protein belongs to the aldehyde dehydrogenase family.

It catalyses the reaction 5-oxopentanoate + NADP(+) + H2O = glutarate + NADPH + 2 H(+). Its pathway is amino-acid degradation. Its function is as follows. Catalyzes the conversion of 5-oxopentanoate (glutarate semialdehyde) to glutarate. Involved in L-lysine degradation. The chain is Glutarate-semialdehyde dehydrogenase from Pseudomonas aeruginosa (strain ATCC 15692 / DSM 22644 / CIP 104116 / JCM 14847 / LMG 12228 / 1C / PRS 101 / PAO1).